Here is a 396-residue protein sequence, read N- to C-terminus: Mevalonate kinase (396 aa).

Residues Lys-13, Asn-55, Ser-135, and 140–146 (GAGLGSS) contribute to the ATP site. Ser-146 (proton donor) is an active-site residue. Mg(2+)-binding residues include Ser-146 and Glu-193. Asp-204 (proton acceptor) is an active-site residue.

The protein belongs to the GHMP kinase family. Mevalonate kinase subfamily. As to quaternary structure, homodimer. Mg(2+) serves as cofactor.

It is found in the cytoplasm. The protein resides in the peroxisome. It catalyses the reaction (R)-mevalonate + ATP = (R)-5-phosphomevalonate + ADP + H(+). It participates in isoprenoid biosynthesis; isopentenyl diphosphate biosynthesis via mevalonate pathway; isopentenyl diphosphate from (R)-mevalonate: step 1/3. Its activity is regulated as follows. Farnesyl pyrophosphate and geranyl pyrophosphate inhibit mevalonate kinase activity by binding competitively at the ATP-binding sites. In terms of biological role, catalyzes the phosphorylation of mevalonate to mevalonate 5-phosphate, a key step in isoprenoid and cholesterol biosynthesis. The polypeptide is Mevalonate kinase (Homo sapiens (Human)).